A 446-amino-acid chain; its full sequence is Peptide chain release factor 1, mitochondrial (446 aa).

A mitochondrion-targeting transit peptide spans 1–62 (MSHHLCIWLF…LLNKSWSRGC (62 aa)). The segment at 298 to 362 (PKDLRVDTFR…LRARLYQQII (65 aa)) is GGQ domain. The GGQ motif lies at 312–314 (GGQ). At Gln314 the chain carries N5-methylglutamine.

Belongs to the prokaryotic/mitochondrial release factor family. Post-translationally, methylation of glutamine in the GGQ triplet by HEMK1 is conserved from bacteria to mammals.

The protein resides in the mitochondrion. Mitochondrial peptide chain release factor that directs the termination of translation in response to the peptide chain non-canonical stop codons AGG and AGA. Non-canonical termination codons AGG and AGA are found at the end of MT-CO1/COX1 and MT-ND6/ND6 open reading frames, respectively. Recognizes non-canonical stop codons via a network of interactions between the codon, MTRF1 and the ribosomal RNA (rRNA): in contrast to other translation release factors, which identify the codon in the A-site via direct interactions of amino acid side chains with the bases, MTRF1 repositions the first 2 bases of the stop codon to use an intricate network of interactions that includes residues of the release factor, the rRNA of the small ribosomal subunit, as well as neighboring bases of the mRNA. This is Peptide chain release factor 1, mitochondrial from Mus musculus (Mouse).